The primary structure comprises 126 residues: Large ribosomal subunit protein bL12c (126 aa).

It belongs to the bacterial ribosomal protein bL12 family. In terms of assembly, homodimer. Part of the ribosomal stalk of the 50S ribosomal subunit. Forms a multimeric L10(L12)X complex, where L10 forms an elongated spine to which 2 to 4 L12 dimers bind in a sequential fashion. Binds GTP-bound translation factors.

The protein resides in the plastid. It localises to the cyanelle. Functionally, forms part of the ribosomal stalk which helps the ribosome interact with GTP-bound translation factors. Is thus essential for accurate translation. The sequence is that of Large ribosomal subunit protein bL12c from Cyanophora paradoxa.